Here is a 149-residue protein sequence, read N- to C-terminus: Probable ubiquitin-conjugating enzyme E2 W (149 aa).

Positions Arg-4–Val-149 constitute a UBC core domain. Cys-88 (glycyl thioester intermediate) is an active-site residue.

Belongs to the ubiquitin-conjugating enzyme family.

The enzyme catalyses S-ubiquitinyl-[E1 ubiquitin-activating enzyme]-L-cysteine + [E2 ubiquitin-conjugating enzyme]-L-cysteine = [E1 ubiquitin-activating enzyme]-L-cysteine + S-ubiquitinyl-[E2 ubiquitin-conjugating enzyme]-L-cysteine.. It catalyses the reaction S-ubiquitinyl-[E1 ubiquitin-activating enzyme]-L-cysteine + [acceptor protein]-N-terminal-amino acid = [E1 ubiquitin-activating enzyme]-L-cysteine + N-terminal-ubiquitinyl-[acceptor protein].. Its pathway is protein modification; protein ubiquitination. Catalyzes the covalent attachment of ubiquitin to other proteins. The sequence is that of Probable ubiquitin-conjugating enzyme E2 W (ube2w) from Dictyostelium discoideum (Social amoeba).